A 592-amino-acid chain; its full sequence is Inactive glycosyltransferase 25 family member 3 (592 aa).

A signal peptide spans 1–19; sequence MHVARLLPLLLLLGQQLRA. 4 N-linked (GlcNAc...) asparagine glycosylation sites follow: N72, N150, N234, and N357. Residues 540–592 are disordered; that stretch reads AEWLSDTETSSPWDDDSGRLISQTGSQKALRGPHLHLTGSSGHSLHPHHRDEL. The short motif at 589-592 is the Prevents secretion from ER element; that stretch reads RDEL.

It belongs to the glycosyltransferase 25 family.

Its subcellular location is the endoplasmic reticulum lumen. Probable cell adhesion protein involved in leukocyte transmigration across the blood-brain barrier. Does not express any beta-galactosyltransferase activity in vitro. The protein is Inactive glycosyltransferase 25 family member 3 (Cercam) of Mus musculus (Mouse).